A 763-amino-acid chain; its full sequence is Amine oxidase [copper-containing] 3 (763 aa).

Residues 2-6 are Cytoplasmic-facing; the sequence is TQKTT. A helical; Signal-anchor for type II membrane protein membrane pass occupies residues 7-27; the sequence is LVLLALAVITIFALVCVLLAG. Over 28 to 763 the chain is Extracellular; sequence RSGDGGRLSQ…AFSHGGFTYK (736 aa). A glycan (N-linked (GlcNAc...) asparagine) is linked at Asn-137. Cys-198 and Cys-199 are joined by a disulfide. 2 N-linked (GlcNAc...) asparagine glycosylation sites follow: Asn-232 and Asn-294. The Proton acceptor role is filled by Asp-386. A disulfide bond links Cys-404 and Cys-430. Tyr-471 acts as the Schiff-base intermediate with substrate; via topaquinone in catalysis. The residue at position 471 (Tyr-471) is a 2',4',5'-topaquinone. Residues His-520 and His-522 each contribute to the Cu(2+) site. Ca(2+) is bound by residues Asp-529, Leu-530, Asp-531, and Glu-572. Residues Asn-581 and Asn-592 are each glycosylated (N-linked (GlcNAc...) asparagine). Ca(2+) is bound by residues Glu-641 and Phe-663. Asn-666 carries an N-linked (GlcNAc...) asparagine glycan. The Ca(2+) site is built by Glu-667, Asp-673, and Leu-674. His-684 contributes to the Cu(2+) binding site. Cys-734 and Cys-741 are disulfide-bonded.

Belongs to the copper/topaquinone oxidase family. As to quaternary structure, homodimer; disulfide-linked. Probably forms heterodimers with AOC2. Cu(2+) serves as cofactor. Ca(2+) is required as a cofactor. It depends on L-topaquinone as a cofactor. In terms of processing, topaquinone (TPQ) is generated by copper-dependent autoxidation of a specific tyrosyl residue. N- and O-glycosylated. Highly expressed in adipocytes, aorta and lung. Expressed at lower levels in heart, kidney, large intestine, liver, small intestine and stomach.

Its subcellular location is the cell membrane. The catalysed reaction is methylamine + O2 + H2O = formaldehyde + H2O2 + NH4(+). It carries out the reaction benzylamine + O2 + H2O = benzaldehyde + H2O2 + NH4(+). The enzyme catalyses 2-phenylethylamine + O2 + H2O = 2-phenylacetaldehyde + H2O2 + NH4(+). Functionally, catalyzes the oxidative deamination of primary amines to the corresponding aldehydes with the concomitant production of hydrogen peroxide and ammonia. Has a preference for the primary monoamines methylamine and benzylamine. Could also act on 2-phenylethylamine but much less efficiently. At endothelial cells surface can also function as a cell adhesion protein that participates in lymphocyte extravasation and recirculation by mediating the binding of lymphocytes to peripheral lymph node vascular endothelial cells in an L-selectin-independent fashion. The chain is Amine oxidase [copper-containing] 3 from Rattus norvegicus (Rat).